The following is a 642-amino-acid chain: 2-oxoacid:ferredoxin oxidoreductase 2, subunit alpha (642 aa).

The YPITP motif motif lies at tyrosine 263–proline 267. Threonine 266 and arginine 356 together coordinate substrate.

In terms of assembly, heterodimer composed of an alpha and a beta subunit.

It catalyses the reaction a 2-oxocarboxylate + 2 oxidized [2Fe-2S]-[ferredoxin] + CoA = an acyl-CoA + 2 reduced [2Fe-2S]-[ferredoxin] + CO2 + H(+). Functionally, catalyzes the coenzyme A-dependent oxidative decarboxylation of different 2-oxoacids such as pyruvate, 2-oxobutyrate, glyoxylate and 2-oxoglutarate to form their CoA derivatives. This chain is 2-oxoacid:ferredoxin oxidoreductase 2, subunit alpha, found in Aeropyrum pernix (strain ATCC 700893 / DSM 11879 / JCM 9820 / NBRC 100138 / K1).